We begin with the raw amino-acid sequence, 279 residues long: Putative pyruvate, phosphate dikinase regulatory protein (279 aa).

153 to 160 (GVSRTSKT) contributes to the ADP binding site.

This sequence belongs to the pyruvate, phosphate/water dikinase regulatory protein family. PDRP subfamily.

The catalysed reaction is N(tele)-phospho-L-histidyl/L-threonyl-[pyruvate, phosphate dikinase] + ADP = N(tele)-phospho-L-histidyl/O-phospho-L-threonyl-[pyruvate, phosphate dikinase] + AMP + H(+). It carries out the reaction N(tele)-phospho-L-histidyl/O-phospho-L-threonyl-[pyruvate, phosphate dikinase] + phosphate + H(+) = N(tele)-phospho-L-histidyl/L-threonyl-[pyruvate, phosphate dikinase] + diphosphate. Functionally, bifunctional serine/threonine kinase and phosphorylase involved in the regulation of the pyruvate, phosphate dikinase (PPDK) by catalyzing its phosphorylation/dephosphorylation. This Bradyrhizobium sp. (strain ORS 278) protein is Putative pyruvate, phosphate dikinase regulatory protein.